A 133-amino-acid chain; its full sequence is uncharacterized protein (133 aa).

One can recognise an FAS1 domain in the interval 1–130 (MPNIVEIAVS…GIIHVIDNVI (130 aa)).

This is an uncharacterized protein from Synechocystis sp. (strain ATCC 27184 / PCC 6803 / Kazusa).